The chain runs to 337 residues: MDFIDEVKLYLKAGDGGDGCASFRREKFVEFGGPNGGNGGKGGDIIFISDANLNTLLNFRCRRHIKASSGKSGTSRDRSGTAGKDIILKVPVGTQIIDEESEEVIVDLDKPDMEFQVVQGGKGGLGNTNFKSSTNRAPRHFTHGQPGEERNIVLKLKVLSDVGIIGMPNVGKSKFLTRCSNSDTKVGDYEFTTIRPHLGVAKVDYSEIVIADIPGIIADAHLGVGLGHKFLKHIERCKILLHLIDVTHDEIISAYNCTHNELKLYNSDLVEKEEIVVLNKCDLLEETEILEKKNHLANYLDREVLCLSIDDDLQPILRLLNEKVKTKEINVYDPFKM.

The Obg domain occupies 1–159 (MDFIDEVKLY…RNIVLKLKVL (159 aa)). Residues 160-329 (SDVGIIGMPN…LNEKVKTKEI (170 aa)) enclose the OBG-type G domain. GTP contacts are provided by residues 166–173 (GMPNVGKS), 191–195 (FTTIR), 212–215 (DIPG), 279–282 (NKCD), and 310–312 (DDD). The Mg(2+) site is built by S173 and T193.

Belongs to the TRAFAC class OBG-HflX-like GTPase superfamily. OBG GTPase family. In terms of assembly, monomer. Mg(2+) is required as a cofactor.

Its subcellular location is the cytoplasm. An essential GTPase which binds GTP, GDP and possibly (p)ppGpp with moderate affinity, with high nucleotide exchange rates and a fairly low GTP hydrolysis rate. Plays a role in control of the cell cycle, stress response, ribosome biogenesis and in those bacteria that undergo differentiation, in morphogenesis control. In Wolbachia pipientis subsp. Culex pipiens (strain wPip), this protein is GTPase Obg.